The primary structure comprises 212 residues: Ribosomal RNA small subunit methyltransferase G (212 aa).

Residues G73, F78, 96–98 (ESS), 124–125 (VE), and R141 contribute to the S-adenosyl-L-methionine site.

Belongs to the methyltransferase superfamily. RNA methyltransferase RsmG family.

Its subcellular location is the cytoplasm. In terms of biological role, specifically methylates the N7 position of a guanine in 16S rRNA. This Aster yellows witches'-broom phytoplasma (strain AYWB) protein is Ribosomal RNA small subunit methyltransferase G.